Reading from the N-terminus, the 356-residue chain is Zinc finger CW-type PWWP domain protein 2 (356 aa).

A CW-type zinc finger spans residues 24 to 79 (MYVNKVWVQCENENCLKWRLLSSEDSAKVDHDEPWYCFMNTDSRYNNCSISEEDFP). Zn(2+) is bound by residues cysteine 33, cysteine 38, cysteine 60, and cysteine 71. One can recognise a PWWP domain in the interval 98-162 (LGSLVLVKLQ…ATFVGHYSIT (65 aa)). A disordered region spans residues 279–307 (QALQPTATPDESEEGHGEEINMGEKLSKC).

Histone methylation reader which binds to non-methylated (H3K4me0), monomethylated (H3K4me1), dimethylated (H3K4me2) and trimethylated (H3K4me3) 'Lys-4' on histone H3. The order of binding preference is H3K4me3 &gt; H3K4me2 &gt; H3K4me1 &gt; H3K4me0. The protein is Zinc finger CW-type PWWP domain protein 2 (ZCWPW2) of Homo sapiens (Human).